We begin with the raw amino-acid sequence, 443 residues long: Light-independent protochlorophyllide reductase subunit N (443 aa).

[4Fe-4S] cluster is bound by residues Cys15, Cys40, and Cys99.

This sequence belongs to the BchN/ChlN family. As to quaternary structure, protochlorophyllide reductase is composed of three subunits; BchL, BchN and BchB. Forms a heterotetramer of two BchB and two BchN subunits. [4Fe-4S] cluster serves as cofactor.

It catalyses the reaction chlorophyllide a + oxidized 2[4Fe-4S]-[ferredoxin] + 2 ADP + 2 phosphate = protochlorophyllide a + reduced 2[4Fe-4S]-[ferredoxin] + 2 ATP + 2 H2O. It participates in porphyrin-containing compound metabolism; bacteriochlorophyll biosynthesis (light-independent). Functionally, component of the dark-operative protochlorophyllide reductase (DPOR) that uses Mg-ATP and reduced ferredoxin to reduce ring D of protochlorophyllide (Pchlide) to form chlorophyllide a (Chlide). This reaction is light-independent. The NB-protein (BchN-BchB) is the catalytic component of the complex. This chain is Light-independent protochlorophyllide reductase subunit N, found in Heliobacterium modesticaldum (strain ATCC 51547 / Ice1).